Here is a 405-residue protein sequence, read N- to C-terminus: L-carnitine CoA-transferase (405 aa).

Residues K97 and R104 each contribute to the CoA site. The active-site Nucleophile is the D169.

Belongs to the CoA-transferase III family. CaiB subfamily. Homodimer.

The protein localises to the cytoplasm. It catalyses the reaction crotonobetainyl-CoA + (R)-carnitine = crotonobetaine + (R)-carnitinyl-CoA. It carries out the reaction 4-(trimethylamino)butanoyl-CoA + (R)-carnitine = (R)-carnitinyl-CoA + 4-(trimethylamino)butanoate. Its pathway is amine and polyamine metabolism; carnitine metabolism. Its function is as follows. Catalyzes the reversible transfer of the CoA moiety from gamma-butyrobetainyl-CoA to L-carnitine to generate L-carnitinyl-CoA and gamma-butyrobetaine. Is also able to catalyze the reversible transfer of the CoA moiety from gamma-butyrobetainyl-CoA or L-carnitinyl-CoA to crotonobetaine to generate crotonobetainyl-CoA. The sequence is that of L-carnitine CoA-transferase from Escherichia coli (strain SE11).